Consider the following 896-residue polypeptide: Translation initiation factor IF-2 (896 aa).

2 disordered regions span residues 32 to 99 (LAQA…TALP) and 117 to 304 (EITS…KQAE). The span at 35–48 (AGSSDTKNSPASKA) shows a compositional bias: polar residues. The segment covering 153 to 169 (TPERIEETPIIRTRTEP) has biased composition (basic and acidic residues). Positions 203 to 214 (AASTEETTQQQP) are enriched in low complexity. Positions 215 to 227 (RQNDAASHNNKQQ) are enriched in polar residues. Positions 228–241 (PSGTSSRPASSAPS) are enriched in low complexity. Over residues 256-280 (RGSERDRSKRSDESVKAFTGRDRYG) the composition is skewed to basic and acidic residues. Residues 401 to 570 (IRSPIVAFMG…ALQAEVLELK (170 aa)) enclose the tr-type G domain. Residues 410–417 (GHVDHGKT) are G1. Residue 410-417 (GHVDHGKT) participates in GTP binding. Positions 435 to 439 (AITQH) are G2. The interval 456–459 (DTPG) is G3. GTP contacts are provided by residues 456–460 (DTPGH) and 510–513 (NKCD). The G4 stretch occupies residues 510–513 (NKCD). Residues 546–548 (SAK) form a G5 region.

Belongs to the TRAFAC class translation factor GTPase superfamily. Classic translation factor GTPase family. IF-2 subfamily.

It is found in the cytoplasm. In terms of biological role, one of the essential components for the initiation of protein synthesis. Protects formylmethionyl-tRNA from spontaneous hydrolysis and promotes its binding to the 30S ribosomal subunits. Also involved in the hydrolysis of GTP during the formation of the 70S ribosomal complex. This chain is Translation initiation factor IF-2, found in Chlamydia trachomatis serovar L2 (strain ATCC VR-902B / DSM 19102 / 434/Bu).